A 474-amino-acid polypeptide reads, in one-letter code: ATP synthase subunit beta (474 aa).

G155 to T162 is an ATP binding site.

This sequence belongs to the ATPase alpha/beta chains family. As to quaternary structure, F-type ATPases have 2 components, CF(1) - the catalytic core - and CF(0) - the membrane proton channel. CF(1) has five subunits: alpha(3), beta(3), gamma(1), delta(1), epsilon(1). CF(0) has three main subunits: a(1), b(2) and c(9-12). The alpha and beta chains form an alternating ring which encloses part of the gamma chain. CF(1) is attached to CF(0) by a central stalk formed by the gamma and epsilon chains, while a peripheral stalk is formed by the delta and b chains.

It is found in the cell inner membrane. It catalyses the reaction ATP + H2O + 4 H(+)(in) = ADP + phosphate + 5 H(+)(out). Its function is as follows. Produces ATP from ADP in the presence of a proton gradient across the membrane. The catalytic sites are hosted primarily by the beta subunits. In Sorangium cellulosum (strain So ce56) (Polyangium cellulosum (strain So ce56)), this protein is ATP synthase subunit beta.